The sequence spans 456 residues: Imidazolonepropionase (456 aa).

Residues histidine 104 and histidine 106 each contribute to the Fe(3+) site. Residues histidine 104 and histidine 106 each contribute to the Zn(2+) site. 4-imidazolone-5-propanoate is bound by residues arginine 113, tyrosine 176, and histidine 209. Tyrosine 176 is an N-formimidoyl-L-glutamate binding site. Histidine 274 is a binding site for Fe(3+). Histidine 274 contacts Zn(2+). Glutamine 277 is a 4-imidazolone-5-propanoate binding site. Residue aspartate 349 participates in Fe(3+) binding. Residue aspartate 349 participates in Zn(2+) binding. Positions 351 and 353 each coordinate N-formimidoyl-L-glutamate. Residue serine 354 coordinates 4-imidazolone-5-propanoate.

The protein belongs to the metallo-dependent hydrolases superfamily. HutI family. It depends on Zn(2+) as a cofactor. Fe(3+) serves as cofactor.

It localises to the cytoplasm. It catalyses the reaction 4-imidazolone-5-propanoate + H2O = N-formimidoyl-L-glutamate. The protein operates within amino-acid degradation; L-histidine degradation into L-glutamate; N-formimidoyl-L-glutamate from L-histidine: step 3/3. Functionally, catalyzes the hydrolytic cleavage of the carbon-nitrogen bond in imidazolone-5-propanoate to yield N-formimidoyl-L-glutamate. It is the third step in the universal histidine degradation pathway. This is Imidazolonepropionase from Verminephrobacter eiseniae (strain EF01-2).